The sequence spans 431 residues: MLDIQLLRSNTAAVAERLARRGYDFDTARFDALEERRKSVQVKTEELQASRNSISKQIGALKGQGKHEEAQAAMDQVAQIKTDLEQAAADLDAVQKELDAWLLSIPNLPHESVPPGKDETENVEVRKVGTPREFDFEIKDHVDLGEPLGLDFEGGAKLSGARFTVMRGQIARLHRALAQFMLDTHTLQHGYTEHYTPYIVDDTTLQGTGQLPKFAEDLFHVTRGGDETKTTQYLIPTAEVTLTNTVAGSIIPSEQLPLKLTAHSPCFRSEAGSYGKDTRGLIRQHQFDKVEMVQIVHPEKSYGALEEMVGHAENILKALELPYRVITLCTGDMGFSAAKTYDLEVWVPAQNTYREISSCSNCEDFQARRMKARFKDENGKNRLVHTLNGSGLAVGRTLVAVLENHQNADGSINIPAALQPYMGGVTKLEVK.

Position 237-239 (237-239 (TAE)) interacts with L-serine. An ATP-binding site is contributed by 268–270 (RSE). An L-serine-binding site is contributed by Glu291. 355 to 358 (EISS) contributes to the ATP binding site. Ser390 contributes to the L-serine binding site.

This sequence belongs to the class-II aminoacyl-tRNA synthetase family. Type-1 seryl-tRNA synthetase subfamily. In terms of assembly, homodimer. The tRNA molecule binds across the dimer.

The protein localises to the cytoplasm. The catalysed reaction is tRNA(Ser) + L-serine + ATP = L-seryl-tRNA(Ser) + AMP + diphosphate + H(+). It carries out the reaction tRNA(Sec) + L-serine + ATP = L-seryl-tRNA(Sec) + AMP + diphosphate + H(+). Its pathway is aminoacyl-tRNA biosynthesis; selenocysteinyl-tRNA(Sec) biosynthesis; L-seryl-tRNA(Sec) from L-serine and tRNA(Sec): step 1/1. Functionally, catalyzes the attachment of serine to tRNA(Ser). Is also able to aminoacylate tRNA(Sec) with serine, to form the misacylated tRNA L-seryl-tRNA(Sec), which will be further converted into selenocysteinyl-tRNA(Sec). The polypeptide is Serine--tRNA ligase (Neisseria gonorrhoeae (strain NCCP11945)).